Reading from the N-terminus, the 119-residue chain is RIIa domain-containing protein 1 (119 aa).

The 35-residue stretch at Lys70 to Leu104 folds into the RIIa domain.

In terms of tissue distribution, abundant in tissues rich in highly ciliated cells, such as testis, trachea and olfactory epithelium.

The chain is RIIa domain-containing protein 1 (Riiad1) from Mus musculus (Mouse).